The chain runs to 236 residues: Leucyl/phenylalanyl-tRNA--protein transferase (236 aa).

Belongs to the L/F-transferase family.

Its subcellular location is the cytoplasm. The enzyme catalyses N-terminal L-lysyl-[protein] + L-leucyl-tRNA(Leu) = N-terminal L-leucyl-L-lysyl-[protein] + tRNA(Leu) + H(+). It catalyses the reaction N-terminal L-arginyl-[protein] + L-leucyl-tRNA(Leu) = N-terminal L-leucyl-L-arginyl-[protein] + tRNA(Leu) + H(+). It carries out the reaction L-phenylalanyl-tRNA(Phe) + an N-terminal L-alpha-aminoacyl-[protein] = an N-terminal L-phenylalanyl-L-alpha-aminoacyl-[protein] + tRNA(Phe). In terms of biological role, functions in the N-end rule pathway of protein degradation where it conjugates Leu, Phe and, less efficiently, Met from aminoacyl-tRNAs to the N-termini of proteins containing an N-terminal arginine or lysine. The sequence is that of Leucyl/phenylalanyl-tRNA--protein transferase from Aliivibrio salmonicida (strain LFI1238) (Vibrio salmonicida (strain LFI1238)).